We begin with the raw amino-acid sequence, 343 residues long: Multidrug resistance protein MdtN (343 aa).

Over 1–12 (MESTPKKAPRSK) the chain is Cytoplasmic. A helical; Signal-anchor for type II membrane protein transmembrane segment spans residues 13–33 (FPALLVVALALVALVFVIWRV). The Periplasmic portion of the chain corresponds to 34–343 (DSAPSTNDAY…ASAVANLEPQ (310 aa)).

The protein belongs to the membrane fusion protein (MFP) (TC 8.A.1) family. As to quaternary structure, could be part of a tripartite efflux system composed of MdtN, MdtO and MdtP.

The protein resides in the cell inner membrane. Its function is as follows. Could be involved in resistance to puromycin, acriflavine and tetraphenylarsonium chloride. The chain is Multidrug resistance protein MdtN (mdtN) from Escherichia coli (strain K12).